The following is a 944-amino-acid chain: 2-oxoglutarate dehydrogenase E1 component (944 aa).

Positions 914 to 944 (RRRRSSPAEGDPTVHKKEQERIVSDSLTRKN) are disordered. Residues 925-936 (PTVHKKEQERIV) show a composition bias toward basic and acidic residues.

It belongs to the alpha-ketoglutarate dehydrogenase family. In terms of assembly, homodimer. Part of the 2-oxoglutarate dehydrogenase (OGDH) complex composed of E1 (2-oxoglutarate dehydrogenase), E2 (dihydrolipoamide succinyltransferase) and E3 (dihydrolipoamide dehydrogenase); the complex contains multiple copies of the three enzymatic components (E1, E2 and E3). Thiamine diphosphate is required as a cofactor.

The enzyme catalyses N(6)-[(R)-lipoyl]-L-lysyl-[protein] + 2-oxoglutarate + H(+) = N(6)-[(R)-S(8)-succinyldihydrolipoyl]-L-lysyl-[protein] + CO2. E1 component of the 2-oxoglutarate dehydrogenase (OGDH) complex which catalyzes the decarboxylation of 2-oxoglutarate, the first step in the conversion of 2-oxoglutarate to succinyl-CoA and CO(2). This chain is 2-oxoglutarate dehydrogenase E1 component, found in Bacillus licheniformis (strain ATCC 14580 / DSM 13 / JCM 2505 / CCUG 7422 / NBRC 12200 / NCIMB 9375 / NCTC 10341 / NRRL NRS-1264 / Gibson 46).